The following is a 253-amino-acid chain: Trypsin delta (253 aa).

A signal peptide spans 1-22 (MLKFVILLSAVACALGGTIPEG). Residues 23–30 (LLPQLDGR) constitute a propeptide, activation peptide. The Peptidase S1 domain maps to 31–253 (IVGGTATTIS…DLRAWVVRNA (223 aa)). Cys56 and Cys72 form a disulfide bridge. Residues His71 and Asp116 each act as charge relay system in the active site. 2 cysteine pairs are disulfide-bonded: Cys180–Cys197 and Cys206–Cys230. Catalysis depends on Ser210, which acts as the Charge relay system.

The protein belongs to the peptidase S1 family.

Its subcellular location is the secreted. The protein resides in the extracellular space. It catalyses the reaction Preferential cleavage: Arg-|-Xaa, Lys-|-Xaa.. This chain is Trypsin delta, found in Drosophila erecta (Fruit fly).